The primary structure comprises 606 residues: Acetylcholinesterase (606 aa).

The N-terminal stretch at 1–28 (MPSCQPGKMPAPWPWWLQLLLCIPSCVA) is a signal peptide. Residues cysteine 98 and cysteine 125 are joined by a disulfide bond. The active-site Acyl-ester intermediate is serine 231. An intrachain disulfide couples cysteine 285 to cysteine 296. An N-linked (GlcNAc...) asparagine glycan is attached at asparagine 289. The active-site Charge relay system is glutamate 358. N-linked (GlcNAc...) asparagine glycosylation occurs at asparagine 374. An intrachain disulfide couples cysteine 433 to cysteine 552. The active-site Charge relay system is histidine 471. Asparagine 484 carries N-linked (GlcNAc...) asparagine glycosylation.

The protein belongs to the type-B carboxylesterase/lipase family. As to quaternary structure, isoform S is monomeric. Isoform T can form oligomers, including collagen-tailed forms. The N-terminus is blocked. Liver and muscle contain both isoform T and isoform S. Venom gland predominantly contains isoform S.

It localises to the synapse. The protein localises to the secreted. It is found in the cell membrane. The enzyme catalyses acetylcholine + H2O = choline + acetate + H(+). Its activity is regulated as follows. Inhibited by active site inhibitors: edrophonium, trimethyl-(m-acetamidopheny1)-ammonium iodide, and trimethyl-(p-acetarnidopheny1)-ammonium iodide. Inhibited by both active and peripheral site inhibitors: decamethonium, and BW284c51. Inhibited by peripheral site inhibitors: snake acetylcholinesterase fasciculin-2, propidium, gallamine, D-tubocurarine, and tacrine. Also inhibited by antibodies Elec410 and Fab410. In terms of biological role, in muscle, it terminates signal transduction at the neuromuscular junction by rapid hydrolysis of the acetylcholine released into the synaptic cleft. In liver, its function is unclear: it could serve as a safeguard against any diffusion of acetylcholine from synapses into the circulation. In venom, its toxic role is unclear: it could result in less musculatory control by rapidly hydrolyzing acetylcholine, or that it works synergistically with alkaline phosphatase (ALP) in paralyzing prey through hypotension. This is Acetylcholinesterase (ACHE) from Bungarus fasciatus (Banded krait).